Consider the following 122-residue polypeptide: UPF0102 protein Ping_1176 (122 aa).

This sequence belongs to the UPF0102 family.

The polypeptide is UPF0102 protein Ping_1176 (Psychromonas ingrahamii (strain DSM 17664 / CCUG 51855 / 37)).